Here is a 922-residue protein sequence, read N- to C-terminus: MATEKGHSRDDEERVPLTRGSTEFRNSIDSFDYSSSTASLSLAVIDRINNSTQDAGLSEKGPRDDDDDRYWDDDVEYDVEDADYIPSGGKPMHKSVKIALWSLLFLSLGGWSLAFVLFIFRSHDTYQTPILSEDNISSGGLRGDRITLDDVLGEEWMPRHHFISWFPGPNGEDGLLLEKDGPGSTGYLRVEDIVSRKDTNSSKGSIVLMQKNTFTVGGETVICSQVWPSPDLKTVLVLSEKKQNWRHSFTGKYWLFDVDTQTGQPLDPAAQDQRIQLASWSHKSDAVVFTRDNNMFLRKLSSKEVITITSDGGVDLLYGVPDWVYEEEVFSGNSATWWAHDGNYIAFLRTNESAVPEYPIQYFVSRPSGEDPNLGEENYPEVREIKYPKAGAPNPIVDLQFYDIRKGEIFSVDVADRFPDDNRLIIEVLWASNGKVLVRETNRESDILIIAAIDVLSRTGKIVRKEDINALDGGWVEPTQSTRFIPADPSNDRPEDGYIDTVIHEGRDQLAYFTPLDNPKPLILTKGHSEVVNSPSGVDLKRGLVYFVVAGNEPWERHVYSVKFDGTALQPVTNVSESSYYDVSFSDGAGYALLNFRGPKVPWQKVISTPANENPFEEIIEQNNHLSRKLRLFSLESKVFQYINIDGFSLPVLERRPPNFDPTKKYPVLFYLYGGPGSQTVDKKFGVDFQSYVASTLGYIVVTVDGRGTGYIGRKSLSLVRGKLGHYEARDQIEVAKKWAAKPYVDESRMAIWGWSYGGFMTLKTIEEDGGRTFQYGMAVAPVTDWRYYDSIYAERYMHTPQHNPQGYDSSAISNTTALANSVRFLVMHGTADDNVHIQNTLTLLDKLDLANVDNYDVHVFPDSNHNINYHNAHKMVYTRLADWLVNAFNGQWLKTNNPTPNDSLFRRVATWAGLYKFKHLC.

Basic and acidic residues predominate over residues 1-16 (MATEKGHSRDDEERVP). A disordered region spans residues 1-21 (MATEKGHSRDDEERVPLTRGS). Residues 1-99 (MATEKGHSRD…KPMHKSVKIA (99 aa)) are Cytoplasmic-facing. A helical; Signal-anchor for type II membrane protein membrane pass occupies residues 100–120 (LWSLLFLSLGGWSLAFVLFIF). At 121–922 (RSHDTYQTPI…AGLYKFKHLC (802 aa)) the chain is on the vacuolar side. Residues Asn135, Asn200, Asn351, and Asn574 are each glycosylated (N-linked (GlcNAc...) asparagine). Ser756 (charge relay system) is an active-site residue. Asn815 carries an N-linked (GlcNAc...) asparagine glycan. Active-site charge relay system residues include Asp833 and His866. Asn902 carries N-linked (GlcNAc...) asparagine glycosylation.

Belongs to the peptidase S9B family.

The protein localises to the vacuole membrane. It catalyses the reaction Release of an N-terminal dipeptide, Xaa-Yaa-|-Zaa-, from a polypeptide, preferentially when Yaa is Pro, provided Zaa is neither Pro nor hydroxyproline.. Functionally, type IV dipeptidyl-peptidase which removes N-terminal dipeptides sequentially from polypeptides having unsubstituted N-termini provided that the penultimate residue is proline. In Ajellomyces capsulatus (strain NAm1 / WU24) (Darling's disease fungus), this protein is Probable dipeptidyl-aminopeptidase B (DAPB).